We begin with the raw amino-acid sequence, 510 residues long: Cytochrome P450 monooxygenase BOT1 (510 aa).

A helical transmembrane segment spans residues 16-36 (PLAWAALILASFTLYSVQLVV). Cysteine 454 provides a ligand contact to heme. An N-linked (GlcNAc...) asparagine glycan is attached at asparagine 476.

This sequence belongs to the cytochrome P450 family. The cofactor is heme.

Its subcellular location is the membrane. The protein operates within secondary metabolite biosynthesis. Functionally, cytochrome P450 monooxygenase; part of the gene cluster that mediates the biosynthesis of botrydial. Botrydial is necessary for colonization of plant tissue by the T4 strain. It is a strain-dependent virulence factor since highly aggressive strains like SAS56 or B05 still retain substantial virulence when botrydial synthesis is impaired, since they produce also botcinic acid. The first step of botrydial biosynthesis is performed by the sesquiterpene synthase BOT2 which catalyzes the cyclization of farnesyl diphosphate (FPP) to presilphiperfolan-8-beta-ol (PSP). The cytochrome P450 monooxygenase BOT4 then catalyzes the hydroxylation at C-4 to give a probotryane intermediate. Acetylation of the hydroxyl at C-4 is carried out by the acetyltransferase BOT5, followed by the combined action of the P450 monooxygenases BOT3 and BOT1, to yield finally the glycol, via the regio- and stereospecific hydroxylations at C-10 and C-15 of the probotryane intermediates, respectively. The cleavage of the C10-C15 bond of probotryane skeleton is an intriguing and chemically important reaction, which could be mediated by some of the monooxygenases or by a combination of them. It is possible that either BOT3 or BOT1 would oxidize either the 10- or the 15-hydroxy group to the hydroperoxide derivative, which would then undergo heterolytic fragmentation to give the dialdehyde botrydial. Finally, the dehydrogenase BOT7 might be involved in the conversion of botrydial to dihydrobotrydial. This is Cytochrome P450 monooxygenase BOT1 from Botryotinia fuckeliana (Noble rot fungus).